We begin with the raw amino-acid sequence, 479 residues long: Poly(A) polymerase catalytic subunit (479 aa).

Active-site residues include aspartate 202 and aspartate 204. Residues aspartate 202, aspartate 204, and aspartate 253 each contribute to the Ca(2+) site.

It belongs to the poxviridae poly(A) polymerase catalytic subunit family. Heterodimer of a large (catalytic) subunit and a small (regulatory) subunit.

The enzyme catalyses RNA(n) + ATP = RNA(n)-3'-adenine ribonucleotide + diphosphate. Its function is as follows. Polymerase that creates the 3'-poly(A) tail of mRNA's. This Bos taurus (Bovine) protein is Poly(A) polymerase catalytic subunit (OPG063).